The sequence spans 375 residues: Isopentenyl-diphosphate delta-isomerase (375 aa).

8 to 9 (RK) lines the substrate pocket. FMN contacts are provided by residues threonine 65, 66 to 68 (GMT), serine 96, and asparagine 125. 96–98 (SQR) is a binding site for substrate. Glutamine 160 is a binding site for substrate. Mg(2+) is bound at residue glutamate 161. FMN is bound by residues lysine 192, threonine 222, 273-275 (GVR), and 294-295 (AL).

It belongs to the IPP isomerase type 2 family. In terms of assembly, homooctamer. Dimer of tetramers. It depends on FMN as a cofactor. The cofactor is NADPH. Mg(2+) serves as cofactor.

Its subcellular location is the cytoplasm. The enzyme catalyses isopentenyl diphosphate = dimethylallyl diphosphate. Involved in the biosynthesis of isoprenoids. Catalyzes the 1,3-allylic rearrangement of the homoallylic substrate isopentenyl (IPP) to its allylic isomer, dimethylallyl diphosphate (DMAPP). In Aeropyrum pernix (strain ATCC 700893 / DSM 11879 / JCM 9820 / NBRC 100138 / K1), this protein is Isopentenyl-diphosphate delta-isomerase.